The chain runs to 929 residues: Band 3 anion transport protein (929 aa).

M1 carries the N-acetylmethionine modification. The Cytoplasmic segment spans residues M1–P422. Position 18 is a phosphoserine (S18). 2 positions are modified to phosphotyrosine: Y31 and Y56. A disordered region spans residues A46–S67. The segment covering P58–S67 has biased composition (low complexity). Residues G69 to T303 form a globular region. Residues A190–S199 are interaction with ANK1. S199, S222, and S363 each carry phosphoserine. The interval R317 to N370 is dimerization arm. The interval K366–D389 is disordered. Position 372 is a phosphotyrosine (Y372). A Phosphothreonine modification is found at T374. Residues Q423–L446 traverse the membrane as a helical segment. Topologically, residues G447 to M454 are extracellular. The helical transmembrane segment at G455–A475 threads the bilayer. Topologically, residues Q476–L478 are cytoplasmic. The chain crosses the membrane as a discontinuously helical span at residues L479–F495. Residues S496–E504 are Extracellular-facing. Residues Y505–A525 form a helical membrane-spanning segment. Residues F526–R537 lie on the Cytoplasmic side of the membrane. The chain crosses the membrane as a helical span at residues Y538–I560. The Extracellular segment spans residues K561–T588. A helical membrane pass occupies residues A589–F609. Over K610–R620 the chain is Cytoplasmic. The chain crosses the membrane as a helical span at residues R621 to F641. Topologically, residues I642–M681 are extracellular. N660 carries N-linked (GlcNAc...) asparagine glycosylation. A helical membrane pass occupies residues M682 to I702. Residues T703 to S718 are Cytoplasmic-facing. A helical membrane pass occupies residues G719–F737. Residues G738 to A755 traverse the membrane as a discontinuously helical segment. At L756–R778 the chain is on the cytoplasmic side. Transmembrane regions (helical) follow at residues I779–S799 and R800–L818. Over S819–G856 the chain is Cytoplasmic. Residues I857–L887 constitute an intramembrane region (discontinuously helical). The S-palmitoyl cysteine moiety is linked to residue C861. Residues R888–V929 are Cytoplasmic-facing. A Phosphotyrosine modification is found at Y922.

Belongs to the anion exchanger (TC 2.A.31) family. As to quaternary structure, a dimer in solution, but in its membrane environment, it exists primarily as a mixture of dimers and tetramers and spans the membrane asymmetrically. Component of the ankyrin-1 complex in the erythrocyte, composed of ANK1, RHCE, RHAG, SLC4A1, EPB42, GYPA, GYPB and AQP1. Interacts with STOM; this interaction positively regulates SLC4A1 activity. Interacts with GYPA; a GYPA monomer is bound at each end of the SLC4A1 dimer forming a heterotetramer. Three SLC4A1 dimers (Band 3-I, Band 3-II and Band 3-III) participates in the ankyrin-1 complex. Interacts (via the cytoplasmic domain) with EPB42; this interaction is mediated by the SLC4A1 Band 3-I dimer. Interacts (via the cytoplasmic domain) directly with ANK1; this interaction is mediated by the SLC4A1 Band 3-II and Band 3-III dimers. Interacts with TMEM139. In terms of tissue distribution, detected in erythrocytes (at protein level).

It localises to the cell membrane. The protein resides in the basolateral cell membrane. It carries out the reaction hydrogencarbonate(in) + chloride(out) = hydrogencarbonate(out) + chloride(in). Its function is as follows. Functions both as a transporter that mediates electroneutral anion exchange across the cell membrane and as a structural protein. Component of the ankyrin-1 complex of the erythrocyte membrane; required for normal flexibility and stability of the erythrocyte membrane and for normal erythrocyte shape via the interactions of its cytoplasmic domain with cytoskeletal proteins, glycolytic enzymes, and hemoglobin. Functions as a transporter that mediates the 1:1 exchange of inorganic anions across the erythrocyte membrane. Mediates chloride-bicarbonate exchange in the kidney, and is required for normal acidification of the urine. The chain is Band 3 anion transport protein from Mus musculus (Mouse).